The chain runs to 1099 residues: Transmembrane protein 132D (1099 aa).

Positions 1 to 30 (MCPSEMGTLWHHWSPVLISLAALFSKVTEG) are cleaved as a signal peptide. Residues 31 to 915 (RGILESIQRF…LMQASKGLSD (885 aa)) lie on the Extracellular side of the membrane. Asn-505 carries an N-linked (GlcNAc...) asparagine glycan. The disordered stretch occupies residues 797–858 (FGQNDANPNT…LMEGRGTTTD (62 aa)). Positions 835–848 (GSQEGQYYGSSSMG) are enriched in low complexity. Residues 916-936 (LEIGMYALLGVFCLAILVFLI) form a helical membrane-spanning segment. The Cytoplasmic segment spans residues 937-1099 (NCVTFALKYR…NYMERLHENV (163 aa)).

This sequence belongs to the TMEM132 family. As to quaternary structure, interacts (via C-terminus) with NCKAP. In terms of tissue distribution, expressed in mature oligodendrocytes. Detected in the brain, lung, pancreas and testis. Highly expressed in mature neurons of the adult nervous system.

It is found in the membrane. In terms of biological role, regulate neuronals morphology via inhibition of the WAVE regulatory complex (WCR), a complex that controls F-actin cytoskeletal dynamics. The polypeptide is Transmembrane protein 132D (Homo sapiens (Human)).